The chain runs to 430 residues: Tapasin (430 aa).

The first 15 residues, 1 to 15, serve as a signal peptide directing secretion; sequence MAAGLRLLLAGLCWS. Residues 16-399 are Lumenal-facing; the sequence is QFRVEDAASP…TEGPHLEDIT (384 aa). C34 and C99 are joined by a disulfide. The tract at residues 61–128 is disordered; it reads GDAETPPEPG…PDARSPPTAG (68 aa). N-linked (GlcNAc...) asparagine glycosylation occurs at N78. Positions 101 to 111 are enriched in polar residues; sequence LNPTNPQTGSD. Ig-like C1-type domains lie at 139–273 and 278–382; these read PQYG…LQLH and PKVT…MRVS. Residues C299 and C368 are joined by a disulfide bond. The segment at 316 to 342 is disordered; the sequence is RAGGSGTSQSPRDTVMDSWTSGHRQAA. The span at 322–338 shows a compositional bias: polar residues; sequence TSQSPRDTVMDSWTSGH. A helical membrane pass occupies residues 400–417; sequence GLFLVAFVLCGLIRWLYP. Topologically, residues 418 to 430 are cytoplasmic; it reads KAARPKEETKKSQ.

In terms of assembly, interacts with TAP1 and is thus a subunit of the TAP complex. Interaction with TAP1 is TAP2 independent and is required for efficient peptide-TAP interaction. Obligatory mediator for the interaction between newly assembled MHC class I molecules, calreticulin, ERp57 and TAP. Up to 4 MHC class I/tapasin complexes bind to 1 TAP.

Its subcellular location is the endoplasmic reticulum membrane. Involved in the association of MHC class I with transporter associated with antigen processing (TAP) and in the assembly of MHC class I with peptide (peptide loading). In Gallus gallus (Chicken), this protein is Tapasin (TAPBP).